A 318-amino-acid chain; its full sequence is Bifunctional protein FolD 3 (318 aa).

NADP(+) contacts are provided by residues 173 to 175 and Ile242; that span reads GRS.

It belongs to the tetrahydrofolate dehydrogenase/cyclohydrolase family. In terms of assembly, homodimer.

It catalyses the reaction (6R)-5,10-methylene-5,6,7,8-tetrahydrofolate + NADP(+) = (6R)-5,10-methenyltetrahydrofolate + NADPH. The catalysed reaction is (6R)-5,10-methenyltetrahydrofolate + H2O = (6R)-10-formyltetrahydrofolate + H(+). The protein operates within one-carbon metabolism; tetrahydrofolate interconversion. Its function is as follows. Catalyzes the oxidation of 5,10-methylenetetrahydrofolate to 5,10-methenyltetrahydrofolate and then the hydrolysis of 5,10-methenyltetrahydrofolate to 10-formyltetrahydrofolate. This is Bifunctional protein FolD 3 from Rubrobacter xylanophilus (strain DSM 9941 / JCM 11954 / NBRC 16129 / PRD-1).